The following is a 276-amino-acid chain: Expansin-A25 (276 aa).

The signal sequence occupies residues 1–27; sequence MKLLEQMVYVECFMIIMATLLVSMSYG. Residues 73–183 enclose the Expansin-like EG45 domain; sequence QGACGYGDLF…RRISCARTGG (111 aa). Positions 193 to 272 constitute an Expansin-like CBD domain; the sequence is YFLMILPYNV…NWGFGQTFDG (80 aa).

It belongs to the expansin family. Expansin A subfamily.

It is found in the secreted. The protein resides in the cell wall. The protein localises to the membrane. In terms of biological role, causes loosening and extension of plant cell walls by disrupting non-covalent bonding between cellulose microfibrils and matrix glucans. No enzymatic activity has been found. This chain is Expansin-A25 (EXPA25), found in Arabidopsis thaliana (Mouse-ear cress).